We begin with the raw amino-acid sequence, 293 residues long: N-acetylneuraminate lyase (293 aa).

Aceneuramate-binding residues include Ser-47 and Thr-48. The active-site Proton donor is the Tyr-136. Lys-164 acts as the Schiff-base intermediate with substrate in catalysis. Thr-166, Gly-188, Asp-190, Glu-191, and Ser-207 together coordinate aceneuramate.

This sequence belongs to the DapA family. NanA subfamily. Homotetramer.

It localises to the cytoplasm. It catalyses the reaction aceneuramate = aldehydo-N-acetyl-D-mannosamine + pyruvate. It participates in amino-sugar metabolism; N-acetylneuraminate degradation; D-fructose 6-phosphate from N-acetylneuraminate: step 1/5. In terms of biological role, catalyzes the reversible aldol cleavage of N-acetylneuraminic acid (sialic acid; Neu5Ac) to form pyruvate and N-acetylmannosamine (ManNAc) via a Schiff base intermediate. This chain is N-acetylneuraminate lyase, found in Haemophilus influenzae (strain ATCC 51907 / DSM 11121 / KW20 / Rd).